Reading from the N-terminus, the 335-residue chain is 7,8-didemethyl-8-hydroxy-5-deazariboflavin synthase (335 aa).

Residues 1–246 (MTYSKNVFIP…QVAPNLIDPK (246 aa)) form the Radical SAM core domain. 3 residues coordinate [4Fe-4S] cluster: Cys15, Cys19, and Cys22.

It belongs to the radical SAM superfamily. CofG family. In terms of assembly, consists of two subunits, CofG and CofH. Requires [4Fe-4S] cluster as cofactor.

It carries out the reaction 5-amino-5-(4-hydroxybenzyl)-6-(D-ribitylimino)-5,6-dihydrouracil + S-adenosyl-L-methionine = 7,8-didemethyl-8-hydroxy-5-deazariboflavin + 5'-deoxyadenosine + L-methionine + NH4(+) + H(+). The protein operates within cofactor biosynthesis; coenzyme F0 biosynthesis. In terms of biological role, catalyzes the radical-mediated synthesis of 7,8-didemethyl-8-hydroxy-5-deazariboflavin from 5-amino-5-(4-hydroxybenzyl)-6-(D-ribitylimino)-5,6-dihydrouracil. This chain is 7,8-didemethyl-8-hydroxy-5-deazariboflavin synthase, found in Methanosarcina mazei (strain ATCC BAA-159 / DSM 3647 / Goe1 / Go1 / JCM 11833 / OCM 88) (Methanosarcina frisia).